Here is a 169-residue protein sequence, read N- to C-terminus: Putative phosphoesterase BLi01284/BL02661 (169 aa).

H34 functions as the Proton donor in the catalytic mechanism. 2 consecutive short sequence motifs (HXTX) follow at residues 34–37 (HLTL) and 115–118 (HVTV). Catalysis depends on H115, which acts as the Proton acceptor.

Belongs to the 2H phosphoesterase superfamily. YjcG family.

The polypeptide is Putative phosphoesterase BLi01284/BL02661 (Bacillus licheniformis (strain ATCC 14580 / DSM 13 / JCM 2505 / CCUG 7422 / NBRC 12200 / NCIMB 9375 / NCTC 10341 / NRRL NRS-1264 / Gibson 46)).